The following is a 59-amino-acid chain: MAEDSVTILIVEDDDAYPSFGSLPASHAQYGFRLLRSIFLIMLVIWTAVWLKLLRDALL.

A helical membrane pass occupies residues 32–54; the sequence is FRLLRSIFLIMLVIWTAVWLKLL.

Belongs to the HHV-5 UL2 protein family.

It localises to the host membrane. This is an uncharacterized protein from Human cytomegalovirus (strain Merlin) (HHV-5).